The sequence spans 118 residues: Aspartate 1-decarboxylase (118 aa).

Serine 25 acts as the Schiff-base intermediate with substrate; via pyruvic acid in catalysis. Serine 25 is modified (pyruvic acid (Ser)). A substrate-binding site is contributed by threonine 57. Catalysis depends on tyrosine 58, which acts as the Proton donor. 73-75 lines the substrate pocket; sequence GAA.

Belongs to the PanD family. As to quaternary structure, heterooctamer of four alpha and four beta subunits. Requires pyruvate as cofactor. In terms of processing, is synthesized initially as an inactive proenzyme, which is activated by self-cleavage at a specific serine bond to produce a beta-subunit with a hydroxyl group at its C-terminus and an alpha-subunit with a pyruvoyl group at its N-terminus.

The protein resides in the cytoplasm. It carries out the reaction L-aspartate + H(+) = beta-alanine + CO2. Its pathway is cofactor biosynthesis; (R)-pantothenate biosynthesis; beta-alanine from L-aspartate: step 1/1. In terms of biological role, catalyzes the pyruvoyl-dependent decarboxylation of aspartate to produce beta-alanine. This chain is Aspartate 1-decarboxylase, found in Porphyromonas gingivalis (strain ATCC 33277 / DSM 20709 / CIP 103683 / JCM 12257 / NCTC 11834 / 2561).